A 457-amino-acid polypeptide reads, in one-letter code: tRNA-2-methylthio-N(6)-dimethylallyladenosine synthase (457 aa).

Residues 8–123 (KKVFIKTFGC…LPEMLARRDA (116 aa)) enclose the MTTase N-terminal domain. Positions 17, 54, 86, 160, 164, and 167 each coordinate [4Fe-4S] cluster. One can recognise a Radical SAM core domain in the interval 146–379 (RVDGATAFVS…QEAIEANGRR (234 aa)). The 68-residue stretch at 382 to 449 (QSRVGTVQRI…PHSLRGEVLL (68 aa)) folds into the TRAM domain.

Belongs to the methylthiotransferase family. MiaB subfamily. As to quaternary structure, monomer. The cofactor is [4Fe-4S] cluster.

The protein resides in the cytoplasm. It catalyses the reaction N(6)-dimethylallyladenosine(37) in tRNA + (sulfur carrier)-SH + AH2 + 2 S-adenosyl-L-methionine = 2-methylsulfanyl-N(6)-dimethylallyladenosine(37) in tRNA + (sulfur carrier)-H + 5'-deoxyadenosine + L-methionine + A + S-adenosyl-L-homocysteine + 2 H(+). Functionally, catalyzes the methylthiolation of N6-(dimethylallyl)adenosine (i(6)A), leading to the formation of 2-methylthio-N6-(dimethylallyl)adenosine (ms(2)i(6)A) at position 37 in tRNAs that read codons beginning with uridine. This chain is tRNA-2-methylthio-N(6)-dimethylallyladenosine synthase, found in Methylibium petroleiphilum (strain ATCC BAA-1232 / LMG 22953 / PM1).